The following is a 268-amino-acid chain: L-aspartate dehydrogenase (268 aa).

Residues alanine 125 and asparagine 191 each coordinate NAD(+). The active site involves histidine 221.

The protein belongs to the L-aspartate dehydrogenase family.

The enzyme catalyses L-aspartate + NADP(+) + H2O = oxaloacetate + NH4(+) + NADPH + H(+). The catalysed reaction is L-aspartate + NAD(+) + H2O = oxaloacetate + NH4(+) + NADH + H(+). Its pathway is cofactor biosynthesis; NAD(+) biosynthesis; iminoaspartate from L-aspartate (dehydrogenase route): step 1/1. Functionally, specifically catalyzes the NAD or NADP-dependent dehydrogenation of L-aspartate to iminoaspartate. In Brucella anthropi (strain ATCC 49188 / DSM 6882 / CCUG 24695 / JCM 21032 / LMG 3331 / NBRC 15819 / NCTC 12168 / Alc 37) (Ochrobactrum anthropi), this protein is L-aspartate dehydrogenase.